The chain runs to 377 residues: Chaperone protein DnaJ (377 aa).

One can recognise a J domain in the interval 3-67; that stretch reads DYYDLLGVGR…QTRARYDQFG (65 aa). The CR-type zinc finger occupies 133–215; the sequence is GQEQEIKIPH…CGGQGVRQVR (83 aa). Zn(2+) contacts are provided by Cys-146, Cys-149, Cys-163, Cys-166, Cys-189, Cys-192, Cys-203, and Cys-206. 4 CXXCXGXG motif repeats span residues 146–153, 163–170, 189–196, and 203–210; these read CDTCGGSG, CGTCGGAG, CPNCGGTG, and CNACGGQG.

It belongs to the DnaJ family. As to quaternary structure, homodimer. It depends on Zn(2+) as a cofactor.

The protein resides in the cytoplasm. Participates actively in the response to hyperosmotic and heat shock by preventing the aggregation of stress-denatured proteins and by disaggregating proteins, also in an autonomous, DnaK-independent fashion. Unfolded proteins bind initially to DnaJ; upon interaction with the DnaJ-bound protein, DnaK hydrolyzes its bound ATP, resulting in the formation of a stable complex. GrpE releases ADP from DnaK; ATP binding to DnaK triggers the release of the substrate protein, thus completing the reaction cycle. Several rounds of ATP-dependent interactions between DnaJ, DnaK and GrpE are required for fully efficient folding. Also involved, together with DnaK and GrpE, in the DNA replication of plasmids through activation of initiation proteins. The chain is Chaperone protein DnaJ from Parasynechococcus marenigrum (strain WH8102).